The sequence spans 540 residues: Phosphoenolpyruvate carboxykinase (ATP) (540 aa).

A substrate-binding site is contributed by Arg-65. An N6-acetyllysine modification is found at Lys-87. Residues Tyr-207 and Lys-213 each contribute to the substrate site. ATP is bound by residues Lys-213, His-232, and 248–256 (GLSGTGKTT). Lys-213 and His-232 together coordinate Mn(2+). Residue Asp-269 participates in Mn(2+) binding. ATP is bound by residues Glu-297, Arg-333, 449 to 450 (RI), and Thr-455. Arg-333 contributes to the substrate binding site. An N6-acetyllysine modification is found at Lys-523.

This sequence belongs to the phosphoenolpyruvate carboxykinase (ATP) family. As to quaternary structure, monomer. Mn(2+) serves as cofactor.

Its subcellular location is the cytoplasm. It carries out the reaction oxaloacetate + ATP = phosphoenolpyruvate + ADP + CO2. It participates in carbohydrate biosynthesis; gluconeogenesis. Involved in the gluconeogenesis. Catalyzes the conversion of oxaloacetate (OAA) to phosphoenolpyruvate (PEP) through direct phosphoryl transfer between the nucleoside triphosphate and OAA. This Escherichia coli O6:K15:H31 (strain 536 / UPEC) protein is Phosphoenolpyruvate carboxykinase (ATP).